The sequence spans 225 residues: Ribonuclease 3 (225 aa).

The RNase III domain maps to 5-127 (VTELYKTIDY…IIGAVFLDSD (123 aa)). Position 40 (Glu-40) interacts with Mg(2+). Asp-44 is a catalytic residue. Mg(2+) is bound by residues Asp-113 and Glu-116. The active site involves Glu-116. Residues 154–223 (DPKTLLQEHL…AEKALKILKN (70 aa)) form the DRBM domain.

It belongs to the ribonuclease III family. In terms of assembly, homodimer. Mg(2+) serves as cofactor.

It localises to the cytoplasm. It catalyses the reaction Endonucleolytic cleavage to 5'-phosphomonoester.. Its function is as follows. Digests double-stranded RNA. Involved in the processing of primary rRNA transcript to yield the immediate precursors to the large and small rRNAs (23S and 16S). Processes some mRNAs, and tRNAs when they are encoded in the rRNA operon. Processes pre-crRNA and tracrRNA of type II CRISPR loci if present in the organism. This is Ribonuclease 3 from Pseudoalteromonas translucida (strain TAC 125).